We begin with the raw amino-acid sequence, 177 residues long: Adenine phosphoribosyltransferase (177 aa).

It belongs to the purine/pyrimidine phosphoribosyltransferase family. Homodimer.

Its subcellular location is the cytoplasm. The catalysed reaction is AMP + diphosphate = 5-phospho-alpha-D-ribose 1-diphosphate + adenine. It participates in purine metabolism; AMP biosynthesis via salvage pathway; AMP from adenine: step 1/1. Its function is as follows. Catalyzes a salvage reaction resulting in the formation of AMP, that is energically less costly than de novo synthesis. The sequence is that of Adenine phosphoribosyltransferase from Prosthecochloris aestuarii (strain DSM 271 / SK 413).